The primary structure comprises 556 residues: Formate--tetrahydrofolate ligase (556 aa).

65-72 (TPAGEGKS) is a binding site for ATP.

Belongs to the formate--tetrahydrofolate ligase family.

It carries out the reaction (6S)-5,6,7,8-tetrahydrofolate + formate + ATP = (6R)-10-formyltetrahydrofolate + ADP + phosphate. Its pathway is one-carbon metabolism; tetrahydrofolate interconversion. This is Formate--tetrahydrofolate ligase from Clostridium perfringens (strain SM101 / Type A).